The chain runs to 893 residues: 104 kDa microneme/rhoptry antigen (893 aa).

The N-terminal stretch at 1–19 (MKFLVLLFNILCLFPILGA) is a signal peptide. Disordered stretches follow at residues 492 to 666 (SKKK…FDPK), 681 to 799 (KTKE…PTGK), and 818 to 873 (KEHM…RKPD). Basic and acidic residues-rich tracts occupy residues 525–565 (SESK…EHKP) and 573–591 (KRPEFPKKSKSPKRPESPK). Low complexity predominate over residues 595–606 (RPVSPQRPVSPK). Basic and acidic residues-rich tracts occupy residues 731-755 (EEVKTEDIHSETGEPEEPKRPDSPT), 788-797 (EAGRILRDPT), and 818-830 (KEHMGAEIRKIVV). Over residues 831–841 (DDDGTEADDED) the composition is skewed to acidic residues. The segment covering 851–869 (STVRRRRPRPKKSSKSSKP) has biased composition (basic residues). The GPI-anchor amidated aspartate moiety is linked to residue D873. Positions 874 to 893 (SAFVPSIIFIFLVSLIVGIL) are cleaved as a propeptide — removed in mature form.

Its subcellular location is the cell membrane. This Theileria annulata protein is 104 kDa microneme/rhoptry antigen.